A 230-amino-acid chain; its full sequence is Dephospho-CoA kinase (230 aa).

The interval 1–21 (MSKYAAAPSPYSHQPQTPEHK) is disordered. One can recognise a DPCK domain in the interval 26–225 (VVGLTGGIGS…QDYLKLAQQL (200 aa)). Residue 34–39 (GSGKSA) coordinates ATP.

The protein belongs to the CoaE family.

The protein localises to the cytoplasm. It carries out the reaction 3'-dephospho-CoA + ATP = ADP + CoA + H(+). It functions in the pathway cofactor biosynthesis; coenzyme A biosynthesis; CoA from (R)-pantothenate: step 5/5. In terms of biological role, catalyzes the phosphorylation of the 3'-hydroxyl group of dephosphocoenzyme A to form coenzyme A. The polypeptide is Dephospho-CoA kinase (Psychrobacter cryohalolentis (strain ATCC BAA-1226 / DSM 17306 / VKM B-2378 / K5)).